We begin with the raw amino-acid sequence, 213 residues long: MARYIGPKLKLSRREGTDLQLKSGVKPYDVKTKKAGRVPGQHGNTRNKASEYSLQLREKQKVKRMYGVLERQFANYYKESARARGATGEHLLQMLERRLDNVVYRMGFGSTRAEARQLVSHRAVMIKKAGRDEFVRVNIPSIQVQDGDVIAIHEKAKEQLRIKNAIELATQRGIPEWLEVDHSKMQGTFKQAPDRIDLPAEITESLIVELYSK.

The S4 RNA-binding domain occupies 97–165 (RRLDNVVYRM…AKEQLRIKNA (69 aa)).

This sequence belongs to the universal ribosomal protein uS4 family. As to quaternary structure, part of the 30S ribosomal subunit. Contacts protein S5. The interaction surface between S4 and S5 is involved in control of translational fidelity.

Functionally, one of the primary rRNA binding proteins, it binds directly to 16S rRNA where it nucleates assembly of the body of the 30S subunit. Its function is as follows. With S5 and S12 plays an important role in translational accuracy. In Psychrobacter sp. (strain PRwf-1), this protein is Small ribosomal subunit protein uS4.